A 279-amino-acid polypeptide reads, in one-letter code: Large ribosomal subunit protein uL2 (279 aa).

Positions 224–279 (AMNPIDHPHGGGEGRTSGGRHPVTPWGKGTKGNRTRKSKASDKLIVRSRHAKKKGR) are disordered. A compositionally biased stretch (basic residues) spans 269–279 (VRSRHAKKKGR).

Belongs to the universal ribosomal protein uL2 family. Part of the 50S ribosomal subunit. Forms a bridge to the 30S subunit in the 70S ribosome.

Functionally, one of the primary rRNA binding proteins. Required for association of the 30S and 50S subunits to form the 70S ribosome, for tRNA binding and peptide bond formation. It has been suggested to have peptidyltransferase activity; this is somewhat controversial. Makes several contacts with the 16S rRNA in the 70S ribosome. The polypeptide is Large ribosomal subunit protein uL2 (Cereibacter sphaeroides (strain ATCC 17029 / ATH 2.4.9) (Rhodobacter sphaeroides)).